The following is a 284-amino-acid chain: Nucleotide-binding protein Teth39_0666 (284 aa).

Residue 8-15 (GLSGAGKT) participates in ATP binding. Residue 58-61 (DLRG) participates in GTP binding.

The protein belongs to the RapZ-like family.

Displays ATPase and GTPase activities. This chain is Nucleotide-binding protein Teth39_0666, found in Thermoanaerobacter pseudethanolicus (strain ATCC 33223 / 39E) (Clostridium thermohydrosulfuricum).